A 123-amino-acid chain; its full sequence is Large ribosomal subunit protein bL12 (123 aa).

It belongs to the bacterial ribosomal protein bL12 family. Homodimer. Part of the ribosomal stalk of the 50S ribosomal subunit. Forms a multimeric L10(L12)X complex, where L10 forms an elongated spine to which 2 to 4 L12 dimers bind in a sequential fashion. Binds GTP-bound translation factors.

Forms part of the ribosomal stalk which helps the ribosome interact with GTP-bound translation factors. Is thus essential for accurate translation. The polypeptide is Large ribosomal subunit protein bL12 (Cytophaga hutchinsonii (strain ATCC 33406 / DSM 1761 / CIP 103989 / NBRC 15051 / NCIMB 9469 / D465)).